We begin with the raw amino-acid sequence, 630 residues long: DNA mismatch repair protein MutL (630 aa).

2 disordered regions span residues 361–386 (VLSSDIGGGEDATAPLAPLTGDAPAE) and 407–431 (FERKQEEEVGEERCSPRLPTDGQAE). Residues 407-421 (FERKQEEEVGEERCS) show a composition bias toward basic and acidic residues.

This sequence belongs to the DNA mismatch repair MutL/HexB family.

This protein is involved in the repair of mismatches in DNA. It is required for dam-dependent methyl-directed DNA mismatch repair. May act as a 'molecular matchmaker', a protein that promotes the formation of a stable complex between two or more DNA-binding proteins in an ATP-dependent manner without itself being part of a final effector complex. The protein is DNA mismatch repair protein MutL of Geobacillus kaustophilus (strain HTA426).